The following is a 94-amino-acid chain: Progonadoliberin-3 (94 aa).

The N-terminal stretch at 1-23 is a signal peptide; sequence MEGKGRVLVQLLMLACVLEVSLC. A Pyrrolidone carboxylic acid modification is found at glutamine 24. At glycine 33 the chain carries Glycine amide.

This sequence belongs to the GnRH family.

The protein resides in the secreted. Its function is as follows. Stimulates the secretion of gonadotropins. The polypeptide is Progonadoliberin-3 (gnrh3) (Carassius auratus (Goldfish)).